A 736-amino-acid chain; its full sequence is Serine/threonine-protein kinase BRSK2 (736 aa).

Residues 19–270 (YRLEKTLGKG…LEHIQKHIWY (252 aa)) form the Protein kinase domain. ATP contacts are provided by residues 25–33 (LGKGQTGLV) and Lys48. Asp141 serves as the catalytic Proton acceptor. Thr174 is modified (phosphothreonine; by LKB1). Thr260 carries the post-translational modification Phosphothreonine; by PKA. Phosphoserine is present on Ser294. A UBA domain is found at 297-339 (DIDPDVLDSMHSLGCFRDRNKLLQDLLSEEENQEKMIYFLLLD). Residues 345-366 (PSQEDEDLPPRNEIDPPRKRVD) show a composition bias toward basic and acidic residues. 2 disordered regions span residues 345–475 (PSQE…GVPW) and 493–513 (HRRK…PESS). Phosphoserine occurs at positions 367, 382, 393, 412, 416, 423, and 427. A compositionally biased stretch (low complexity) spans 410 to 428 (SRSISGASSGLSTSPLSSP). Residues 431–445 (TPHPSPRGSPLPTPK) are compositionally biased toward pro residues. At Ser455 the chain carries Phosphoserine. Residues Thr459, Thr463, and Thr509 each carry the phosphothreonine modification. Ser512, Ser513, and Ser520 each carry phosphoserine. The KEN box motif lies at 603–605 (KEN). A disordered region spans residues 681 to 736 (KNGQAAQAPSTPAKRSAHGPLGDSAAAGPGPGGDAEYPTGKDTAKMGPPTARREQP). Low complexity predominate over residues 699 to 708 (GPLGDSAAAG).

Belongs to the protein kinase superfamily. CAMK Ser/Thr protein kinase family. SNF1 subfamily. In terms of assembly, interacts with FZR1, a regulatory subunit of the APC ubiquitin ligase complex. Interacts with COPS5. Interacts with PAK1. Requires Mg(2+) as cofactor. In terms of processing, phosphorylated at Thr-174 by STK11/LKB1 in complex with STE20-related adapter-alpha (STRADA) pseudo kinase and CAB39. Not phosphorylated at Thr-174 by CaMKK2. In contrast, it is phosphorylated and activated by CaMKK1. May be inactivated via dephosphorylation of Thr-174 by PP2C. Phosphorylated at Thr-260 by PKA. Phosphorylation at Thr-260 by PKA was not observed in another study, but this may reflect differences in the experimental approach. Phosphorylation at Thr-260 seems to play a role in the regulation of insulin secretion. Post-translationally, polyubiquitinated by the APC complex in conjunction with FZR1, leading to its proteasomal degradation. Targeted for proteasomal degradation by interaction with COPS5. BRSK2 levels change during the cell cycle. BRSK2 levels are low at the G1/S boundary and gradually increase as cells progress into G2 phase. BRSK2 levels decrease rapidly at the end of mitosis. Detected in pancreas islets (at protein level).

Its subcellular location is the cytoplasm. It localises to the cytoskeleton. The protein localises to the microtubule organizing center. It is found in the centrosome. The protein resides in the perinuclear region. Its subcellular location is the endoplasmic reticulum. The catalysed reaction is L-seryl-[protein] + ATP = O-phospho-L-seryl-[protein] + ADP + H(+). It catalyses the reaction L-threonyl-[protein] + ATP = O-phospho-L-threonyl-[protein] + ADP + H(+). It carries out the reaction L-seryl-[tau protein] + ATP = O-phospho-L-seryl-[tau protein] + ADP + H(+). The enzyme catalyses L-threonyl-[tau protein] + ATP = O-phospho-L-threonyl-[tau protein] + ADP + H(+). With respect to regulation, activated by phosphorylation on Thr-174 by STK11/LKB1. Its function is as follows. Serine/threonine-protein kinase that plays a key role in polarization of neurons and axonogenesis, cell cycle progress and insulin secretion. Phosphorylates CDK16, CDC25C, MAPT/TAU, PAK1 and WEE1. Following phosphorylation and activation by STK11/LKB1, acts as a key regulator of polarization of cortical neurons, probably by mediating phosphorylation of microtubule-associated proteins such as MAPT/TAU at 'Thr-529' and 'Ser-579'. Also regulates neuron polarization by mediating phosphorylation of WEE1 at 'Ser-642' in postmitotic neurons, leading to down-regulate WEE1 activity in polarized neurons. Plays a role in the regulation of the mitotic cell cycle progress and the onset of mitosis. Plays a role in the regulation of insulin secretion in response to elevated glucose levels, probably via phosphorylation of CDK16 and PAK1. While BRSK2 phosphorylated at Thr-174 can inhibit insulin secretion, BRSK2 phosphorylated at Thr-260 can promote insulin secretion. Regulates reorganization of the actin cytoskeleton. May play a role in the apoptotic response triggered by endoplasmic reticulum (ER) stress. The chain is Serine/threonine-protein kinase BRSK2 (BRSK2) from Homo sapiens (Human).